Reading from the N-terminus, the 348-residue chain is Elongation factor Ts (348 aa).

Positions 80 to 83 are involved in Mg(2+) ion dislocation from EF-Tu; it reads TDFV.

Belongs to the EF-Ts family.

The protein localises to the cytoplasm. Functionally, associates with the EF-Tu.GDP complex and induces the exchange of GDP to GTP. It remains bound to the aminoacyl-tRNA.EF-Tu.GTP complex up to the GTP hydrolysis stage on the ribosome. This chain is Elongation factor Ts, found in Streptococcus mutans serotype c (strain ATCC 700610 / UA159).